The following is a 253-amino-acid chain: Triosephosphate isomerase, cytosolic (253 aa).

2 residues coordinate substrate: asparagine 10 and lysine 12. The active-site Electrophile is histidine 96. Glutamate 166 (proton acceptor) is an active-site residue.

This sequence belongs to the triosephosphate isomerase family. Homodimer.

The protein localises to the cytoplasm. The enzyme catalyses D-glyceraldehyde 3-phosphate = dihydroxyacetone phosphate. It functions in the pathway carbohydrate biosynthesis; gluconeogenesis. The protein operates within carbohydrate degradation; glycolysis; D-glyceraldehyde 3-phosphate from glycerone phosphate: step 1/1. This is Triosephosphate isomerase, cytosolic from Coptis japonica (Japanese goldthread).